Consider the following 414-residue polypeptide: NADH kinase POS5, mitochondrial (414 aa).

Belongs to the NAD kinase family.

It is found in the mitochondrion matrix. It catalyses the reaction NADH + ATP = ADP + NADPH + H(+). Phosphorylates both NADH and NAD(+), with a twofold preference for NADH. Anti-oxidant factor and key source of the cellular reductant NADPH. This chain is NADH kinase POS5, mitochondrial (POS5), found in Saccharomyces cerevisiae (strain ATCC 204508 / S288c) (Baker's yeast).